The sequence spans 308 residues: Spermidine synthase 1 (308 aa).

Residues 17–254 (PGWFSEISPL…GVIGFMLCST (238 aa)) form the PABS domain. Gln-48 provides a ligand contact to S-adenosyl 3-(methylsulfanyl)propylamine. Tyr-78 is a binding site for putrescine. S-adenosyl 3-(methylsulfanyl)propylamine-binding positions include Gln-79, Asp-103, Glu-123, 154–155 (DG), and Asp-173. Asp-173 functions as the Proton acceptor in the catalytic mechanism. Putrescine is bound by residues 173-176 (DSSD) and Tyr-242.

Belongs to the spermidine/spermine synthase family.

The enzyme catalyses S-adenosyl 3-(methylsulfanyl)propylamine + putrescine = S-methyl-5'-thioadenosine + spermidine + H(+). Its pathway is amine and polyamine biosynthesis; spermidine biosynthesis; spermidine from putrescine: step 1/1. This chain is Spermidine synthase 1, found in Datura stramonium (Jimsonweed).